The chain runs to 275 residues: 4-diphosphocytidyl-2-C-methyl-D-erythritol kinase (275 aa).

Lys14 is an active-site residue. An ATP-binding site is contributed by 98–108 (PMGAGLGGGSS). Asp140 is a catalytic residue.

This sequence belongs to the GHMP kinase family. IspE subfamily.

It carries out the reaction 4-CDP-2-C-methyl-D-erythritol + ATP = 4-CDP-2-C-methyl-D-erythritol 2-phosphate + ADP + H(+). It functions in the pathway isoprenoid biosynthesis; isopentenyl diphosphate biosynthesis via DXP pathway; isopentenyl diphosphate from 1-deoxy-D-xylulose 5-phosphate: step 3/6. Its function is as follows. Catalyzes the phosphorylation of the position 2 hydroxy group of 4-diphosphocytidyl-2C-methyl-D-erythritol. The protein is 4-diphosphocytidyl-2-C-methyl-D-erythritol kinase of Francisella philomiragia subsp. philomiragia (strain ATCC 25017 / CCUG 19701 / FSC 153 / O#319-036).